The primary structure comprises 332 residues: L-lactate dehydrogenase A chain (332 aa).

NAD(+) is bound by residues 29–57 (GMVG…MEDK) and arginine 99. The substrate site is built by arginine 106, asparagine 138, and arginine 169. Residue asparagine 138 participates in NAD(+) binding. The Proton acceptor role is filled by histidine 193. Threonine 248 serves as a coordination point for substrate.

It belongs to the LDH/MDH superfamily. LDH family. In terms of assembly, homotetramer.

Its subcellular location is the cytoplasm. The enzyme catalyses (S)-lactate + NAD(+) = pyruvate + NADH + H(+). It participates in fermentation; pyruvate fermentation to lactate; (S)-lactate from pyruvate: step 1/1. Its function is as follows. Interconverts simultaneously and stereospecifically pyruvate and lactate with concomitant interconversion of NADH and NAD(+). This Rhinogobiops nicholsii (Blackeye goby) protein is L-lactate dehydrogenase A chain (ldha).